Reading from the N-terminus, the 315-residue chain is 4-hydroxy-3-methylbut-2-enyl diphosphate reductase (315 aa).

C12 contributes to the [4Fe-4S] cluster binding site. (2E)-4-hydroxy-3-methylbut-2-enyl diphosphate is bound by residues H41 and H74. Dimethylallyl diphosphate contacts are provided by H41 and H74. Residues H41 and H74 each contribute to the isopentenyl diphosphate site. C96 contacts [4Fe-4S] cluster. H124 contacts (2E)-4-hydroxy-3-methylbut-2-enyl diphosphate. H124 provides a ligand contact to dimethylallyl diphosphate. H124 contacts isopentenyl diphosphate. E126 acts as the Proton donor in catalysis. T168 lines the (2E)-4-hydroxy-3-methylbut-2-enyl diphosphate pocket. C198 serves as a coordination point for [4Fe-4S] cluster. S226, S227, N228, and S270 together coordinate (2E)-4-hydroxy-3-methylbut-2-enyl diphosphate. The dimethylallyl diphosphate site is built by S226, S227, N228, and S270. Positions 226, 227, 228, and 270 each coordinate isopentenyl diphosphate.

It belongs to the IspH family. [4Fe-4S] cluster is required as a cofactor.

It carries out the reaction isopentenyl diphosphate + 2 oxidized [2Fe-2S]-[ferredoxin] + H2O = (2E)-4-hydroxy-3-methylbut-2-enyl diphosphate + 2 reduced [2Fe-2S]-[ferredoxin] + 2 H(+). The catalysed reaction is dimethylallyl diphosphate + 2 oxidized [2Fe-2S]-[ferredoxin] + H2O = (2E)-4-hydroxy-3-methylbut-2-enyl diphosphate + 2 reduced [2Fe-2S]-[ferredoxin] + 2 H(+). Its pathway is isoprenoid biosynthesis; dimethylallyl diphosphate biosynthesis; dimethylallyl diphosphate from (2E)-4-hydroxy-3-methylbutenyl diphosphate: step 1/1. The protein operates within isoprenoid biosynthesis; isopentenyl diphosphate biosynthesis via DXP pathway; isopentenyl diphosphate from 1-deoxy-D-xylulose 5-phosphate: step 6/6. Its function is as follows. Catalyzes the conversion of 1-hydroxy-2-methyl-2-(E)-butenyl 4-diphosphate (HMBPP) into a mixture of isopentenyl diphosphate (IPP) and dimethylallyl diphosphate (DMAPP). Acts in the terminal step of the DOXP/MEP pathway for isoprenoid precursor biosynthesis. This Pseudomonas fluorescens (strain SBW25) protein is 4-hydroxy-3-methylbut-2-enyl diphosphate reductase.